A 32-amino-acid chain; its full sequence is Sodium channel neurotoxin BmK NT2 (32 aa).

Residues 2–32 (RDAYIAKPENCVYHCAGNEGCNNLCTCNGAT) form the LCN-type CS-alpha/beta domain.

Expressed by the venom gland.

It localises to the secreted. Functionally, alpha toxins bind voltage-independently at site-3 of sodium channels (Nav) and inhibit the inactivation of the activated channels, thereby blocking neuronal transmission. This toxin dose-dependently delays inactivation of voltage-gated sodium channels (Nav) (EC(50)=0.91 uM), and shifts the steady-state activation and inactivation to hyperpolarized direction. In addition, it dose-dependently alters calcium dynamics and increases phosphorylation of MAP kinases 1/3 (MAPK1/MAPK3) and cAMP-response element binding (CREB) proteins in neocortical neurons. This effect is eliminated by tetrodotoxin, a Nav blocker. This is Sodium channel neurotoxin BmK NT2 from Olivierus martensii (Manchurian scorpion).